The sequence spans 372 residues: Alanine dehydrogenase 1 (372 aa).

Residue histidine 94 is part of the active site. 170–200 (TYVIFGGGVAATNAANVALGLNAKVIIIELN) contributes to the NAD(+) binding site.

This sequence belongs to the AlaDH/PNT family.

The enzyme catalyses L-alanine + NAD(+) + H2O = pyruvate + NH4(+) + NADH + H(+). It participates in amino-acid degradation; L-alanine degradation via dehydrogenase pathway; NH(3) and pyruvate from L-alanine: step 1/1. In terms of biological role, may play a role in cell wall synthesis as L-alanine is an important constituent of the peptidoglycan layer. The protein is Alanine dehydrogenase 1 (ald1) of Staphylococcus aureus (strain bovine RF122 / ET3-1).